We begin with the raw amino-acid sequence, 295 residues long: MGDKRQRARVQGAWATPTKSQSAARPATPARSRPSQTPGPSWRSKEQQQCDRRFVFKEPQLVVRAAPEPRVIDREGVYEISLSPTGVSRVCLYPGFVDLKEADWILERLCQDVPWKQRMGIREDITYPQPRLTAWYGELPYTYSRVTMEPNPHWLPVLWTLKSRIEENTGHTFNSLLCNFYRDEKDSVDWHSDDEPSLGSCPVIASLSFGATRTFEMRKKPPPEENGDYTYVERVKIPLDHGTLLIMEGATQADWQHRVPKEYHSRERRVNLTFRTVYPDPRGAPGDTSAELPLR.

Residues 1-48 form a disordered region; it reads MGDKRQRARVQGAWATPTKSQSAARPATPARSRPSQTPGPSWRSKEQQ. Residues 22–35 show a composition bias toward low complexity; it reads SAARPATPARSRPS. Substrate contacts are provided by residues W115 and 141–143; that span reads YTY. The region spanning 172–278 is the Fe2OG dioxygenase domain; it reads TFNSLLCNFY…RVNLTFRTVY (107 aa). L177 is subject to (4R)-5-hydroxyleucine; alternate. At L177 the chain carries (4R)-5-oxoleucine; alternate. Residue 179 to 181 participates in 2-oxoglutarate binding; the sequence is NFY. 2 residues coordinate Fe cation: H191 and D193. Position 194 (D194) interacts with substrate. H257 serves as a coordination point for Fe cation. 2-oxoglutarate contacts are provided by residues 269-275 and R275; that span reads RVNLTFR.

Belongs to the alkB family. As to quaternary structure, interacts with the ASCC complex composed of ASCC1, ASCC2 and ASCC3. Interacts directly with ASCC3, and is thereby recruited to the ASCC complex. Interacts with OTUD4; the interaction is direct. Interacts with USP7 and USP9X. The cofactor is Fe(2+). Post-translationally, ubiquitinated; undergoes 'Lys-48'-linked polyubiquitination. OTUD4 promotes USP7 and USP9X-dependent deubiquitination of 'Lys-48'-polyubiquitinated ALKBH3 promoting the repair of alkylated DNA lesions.

The protein localises to the nucleus. The protein resides in the cytoplasm. The catalysed reaction is an N(1)-methyladenosine in mRNA + 2-oxoglutarate + O2 = an adenosine in mRNA + formaldehyde + succinate + CO2. It catalyses the reaction a methylated nucleobase within DNA + 2-oxoglutarate + O2 = a nucleobase within DNA + formaldehyde + succinate + CO2. The enzyme catalyses an N(1)-methyl-2'-deoxyadenosine in single-stranded DNA + 2-oxoglutarate + O2 = a 2'-deoxyadenosine in single-stranded DNA + formaldehyde + succinate + CO2 + H(+). It carries out the reaction an N(3)-methyl-2'-deoxycytidine in single-stranded DNA + 2-oxoglutarate + O2 = a 2'-deoxycytidine in single-stranded DNA + formaldehyde + succinate + CO2 + H(+). The catalysed reaction is a 3,N(4)-etheno-2'-deoxycytidine in single-stranded DNA + 2-oxoglutarate + O2 + H2O = a 2'-deoxycytidine in single-stranded DNA + glyoxal + succinate + CO2. Its activity is regulated as follows. Activated by ascorbate. Its function is as follows. Dioxygenase that mediates demethylation of DNA and RNA containing 1-methyladenosine (m1A). Repairs alkylated DNA containing 1-methyladenosine (m1A) and 3-methylcytosine (m3C) by oxidative demethylation. Has a strong preference for single-stranded DNA. Able to process alkylated m3C within double-stranded regions via its interaction with ASCC3, which promotes DNA unwinding to generate single-stranded substrate needed for ALKBH3. Can repair exocyclic 3,N4-ethenocytosine adducs in single-stranded DNA. Also acts on RNA. Demethylates N(1)-methyladenosine (m1A) RNA, an epigenetic internal modification of messenger RNAs (mRNAs) highly enriched within 5'-untranslated regions (UTRs) and in the vicinity of start codons. Requires molecular oxygen, alpha-ketoglutarate and iron. This chain is Alpha-ketoglutarate-dependent dioxygenase alkB homolog 3, found in Rattus norvegicus (Rat).